Consider the following 96-residue polypeptide: Glutamyl-tRNA(Gln) amidotransferase subunit C (96 aa).

This sequence belongs to the GatC family. Heterotrimer of A, B and C subunits.

It catalyses the reaction L-glutamyl-tRNA(Gln) + L-glutamine + ATP + H2O = L-glutaminyl-tRNA(Gln) + L-glutamate + ADP + phosphate + H(+). It carries out the reaction L-aspartyl-tRNA(Asn) + L-glutamine + ATP + H2O = L-asparaginyl-tRNA(Asn) + L-glutamate + ADP + phosphate + 2 H(+). In terms of biological role, allows the formation of correctly charged Asn-tRNA(Asn) or Gln-tRNA(Gln) through the transamidation of misacylated Asp-tRNA(Asn) or Glu-tRNA(Gln) in organisms which lack either or both of asparaginyl-tRNA or glutaminyl-tRNA synthetases. The reaction takes place in the presence of glutamine and ATP through an activated phospho-Asp-tRNA(Asn) or phospho-Glu-tRNA(Gln). The protein is Glutamyl-tRNA(Gln) amidotransferase subunit C of Deinococcus radiodurans (strain ATCC 13939 / DSM 20539 / JCM 16871 / CCUG 27074 / LMG 4051 / NBRC 15346 / NCIMB 9279 / VKM B-1422 / R1).